The following is a 120-amino-acid chain: Large ribosomal subunit protein bL20 (120 aa).

Belongs to the bacterial ribosomal protein bL20 family.

Functionally, binds directly to 23S ribosomal RNA and is necessary for the in vitro assembly process of the 50S ribosomal subunit. It is not involved in the protein synthesizing functions of that subunit. The chain is Large ribosomal subunit protein bL20 from Mesoplasma florum (strain ATCC 33453 / NBRC 100688 / NCTC 11704 / L1) (Acholeplasma florum).